Here is a 241-residue protein sequence, read N- to C-terminus: Probable transcriptional regulatory protein stu0195 (241 aa).

It belongs to the TACO1 family. YeeN subfamily.

It is found in the cytoplasm. This is Probable transcriptional regulatory protein stu0195 from Streptococcus thermophilus (strain ATCC BAA-250 / LMG 18311).